Reading from the N-terminus, the 183-residue chain is MGDQKFQRKKYSTPRHPWEKDRIDAERQLLIKYGLKNKRELWRAQTILTNFRTQARTLQAKLRYNDPLAIKQFQLLIGKLSRLNLLGENATLDDVLSLNIEDILERRLETLVYKKNLALTMKQARQFITHGHIKVNDRVVTIPSFMVEKSMEDSITYNETSPFTDENHPLRMEMSGTKEEENE.

The region spanning 106 to 168 is the S4 RNA-binding domain; that stretch reads RRLETLVYKK…ETSPFTDENH (63 aa). Positions 158-183 are disordered; the sequence is NETSPFTDENHPLRMEMSGTKEEENE. Positions 165-183 are enriched in basic and acidic residues; the sequence is DENHPLRMEMSGTKEEENE.

The protein belongs to the universal ribosomal protein uS4 family. As to quaternary structure, part of the 30S ribosomal subunit. Contacts protein S5. The interaction surface between S4 and S5 is involved in control of translational fidelity.

Its function is as follows. One of the primary rRNA binding proteins, it binds directly to 16S rRNA where it nucleates assembly of the body of the 30S subunit. Functionally, with S5 and S12 plays an important role in translational accuracy. The protein is Small ribosomal subunit protein uS4 of Picrophilus torridus (strain ATCC 700027 / DSM 9790 / JCM 10055 / NBRC 100828 / KAW 2/3).